Here is a 144-residue protein sequence, read N- to C-terminus: MSKERTRCREKVLEFLFQKDLGQEIEVDFSDFSPQGQVFAYKLYDGALYYKDLADEIISKFSKNWKLERIGTIEKNILRMAIAEMFTFSDIPQGVTVNEAVELAKKYVSPEAGRFINGILRNIVRNWDEVKKLKEGFVDVTSEN.

It belongs to the NusB family.

Functionally, involved in transcription antitermination. Required for transcription of ribosomal RNA (rRNA) genes. Binds specifically to the boxA antiterminator sequence of the ribosomal RNA (rrn) operons. This Dictyoglomus turgidum (strain DSM 6724 / Z-1310) protein is Transcription antitermination protein NusB.